A 542-amino-acid polypeptide reads, in one-letter code: 4-coumarate--CoA ligase 2 (542 aa).

ATP is bound by residues serine 189, serine 190, glycine 191, threonine 192, threonine 193, and lysine 197. (E)-4-coumaroyl-AMP is bound by residues tyrosine 239 and serine 243. (E)-caffeoyl-AMP is bound by residues tyrosine 239 and serine 243. Residues tyrosine 239 and serine 243 each coordinate (E)-feruloyl-AMP. Lysine 260 lines the CoA pocket. Residues 262–331 form an SBD1 region; sequence DIVSFLELIQ…AKFPNAKLGQ (70 aa). A (E)-4-coumaroyl-AMP-binding site is contributed by alanine 309. A (E)-caffeoyl-AMP-binding site is contributed by alanine 309. Alanine 309 is a (E)-feruloyl-AMP binding site. Glutamine 331, glycine 332, and threonine 336 together coordinate ATP. Residues glycine 332, threonine 336, methionine 344, aspartate 420, arginine 435, lysine 437, and lysine 441 each contribute to the (E)-4-coumaroyl-AMP site. (E)-caffeoyl-AMP-binding residues include glycine 332, threonine 336, methionine 344, aspartate 420, arginine 435, lysine 437, and lysine 441. Glycine 332, threonine 336, methionine 344, aspartate 420, arginine 435, lysine 437, and lysine 441 together coordinate (E)-feruloyl-AMP. Residues glycine 332 and threonine 336 each coordinate AMP. An SBD2 region spans residues 332 to 399; that stretch reads GYGMTEAGPV…IRGDQIMKGY (68 aa). The ATP site is built by aspartate 420 and arginine 435. Aspartate 420 contacts AMP. Positions 437 and 441 each coordinate AMP. Residues lysine 443 and glycine 444 each contribute to the CoA site. Position 446 (glutamine 446) interacts with AMP. Lysine 526 serves as a coordination point for ATP.

The protein belongs to the ATP-dependent AMP-binding enzyme family. Requires Mg(2+) as cofactor. As to expression, mainly expressed in old stems and, to a lower extent, in flowers (e.g. in ovary), leaves, young stems, shoot tips and patel limbs.

The catalysed reaction is (E)-4-coumarate + ATP + CoA = (E)-4-coumaroyl-CoA + AMP + diphosphate. The enzyme catalyses (E)-caffeate + ATP + CoA = (E)-caffeoyl-CoA + AMP + diphosphate. It catalyses the reaction (E)-ferulate + ATP + CoA = (E)-feruloyl-CoA + AMP + diphosphate. It carries out the reaction (E)-cinnamate + ATP + CoA = (E)-cinnamoyl-CoA + AMP + diphosphate. The catalysed reaction is (E)-4-coumarate + ATP + H(+) = (E)-4-coumaroyl-AMP + diphosphate. The enzyme catalyses (E)-4-coumaroyl-AMP + CoA = (E)-4-coumaroyl-CoA + AMP + H(+). It catalyses the reaction (E)-caffeate + ATP + H(+) = (E)-caffeoyl-AMP + diphosphate. It carries out the reaction (E)-caffeoyl-AMP + CoA = (E)-caffeoyl-CoA + AMP + H(+). The catalysed reaction is (E)-ferulate + ATP + H(+) = (E)-feruloyl-AMP + diphosphate. The enzyme catalyses (E)-feruloyl-AMP + CoA = (E)-feruloyl-CoA + AMP + H(+). It participates in phytoalexin biosynthesis; 3,4',5-trihydroxystilbene biosynthesis; 3,4',5-trihydroxystilbene from trans-4-coumarate: step 1/2. Major enzyme of the phenylpropanoid pathway that mediates the production of several precursors for numerous metabolites and regulates carbon flow. Catalyzes the formation of CoA thioesters using 4-coumarate, ferulate, caffeate, and cinnamate as substrates. Follows a two-step reaction mechanism, wherein a (hydroxy)cinnamate substrate first undergoes adenylation by ATP leading to an acyl-AMP, followed by a thioesterification in the presence of CoA to yield the final (hydroxy)cinnamoyl-CoA product. Almost inactive toward sinapate. In Nicotiana tabacum (Common tobacco), this protein is 4-coumarate--CoA ligase 2.